The following is a 480-amino-acid chain: Ammonium transporter 2 member 4 (480 aa).

Over 1–27 (MELPSNLLPDEASPEWMNKGDNAWQLT) the chain is Extracellular. The helical transmembrane segment at 28–48 (AATMVGLQSIPGLVILYGSLV) threads the bilayer. At 49 to 51 (KKT) the chain is on the cytoplasmic side. A helical transmembrane segment spans residues 52-72 (WAINSAFMAFYAFASVLLCWV). Topologically, residues 73–113 (SWAYQMSFGEKMVFFLGKPNVALDEKFLLGKAFLGNFPNAT) are extracellular. N-linked (GlcNAc...) asparagine glycosylation is present at Asn-111. A helical transmembrane segment spans residues 114–134 (MVFYQGVFAGLTLILIAGALL). Over 135–141 (GRMNIRA) the chain is Cytoplasmic. A helical transmembrane segment spans residues 142-162 (WMLFVPLWVTFSYTVVAFSIW). Over 163–175 (CPDGWLAKRGVID) the chain is Extracellular. A helical transmembrane segment spans residues 176–196 (FAGGYVIHLSAGVAGFTAAYW). The Cytoplasmic segment spans residues 197 to 214 (VGPRADKDRETFPAATNN). The helical transmembrane segment at 215 to 235 (MIMVLAGAGLLWMGWSGFNGG) threads the bilayer. Topologically, residues 236 to 242 (APFVAST) are extracellular. A helical membrane pass occupies residues 243–263 (IASLAILNTHVCTAASITVWV). Residues 264 to 274 (MLDTFYFGKPT) lie on the Cytoplasmic side of the membrane. Residues 275–295 (VFGAVQGMITGLVCITPAAGV) form a helical membrane-spanning segment. Residues 296-298 (VQG) are Extracellular-facing. Residues 299–319 (WAAILMGFISGSIPWYTMMVL) traverse the membrane as a helical segment. At 320-334 (HNKVNFLKKIDDPMA) the chain is on the cytoplasmic side. The helical transmembrane segment at 335–355 (VFHTHAIAGALGGILTGFFAV) threads the bilayer. The Extracellular segment spans residues 356–394 (PKLCRLFYMVPDWEKYIGLAYGLQNKGATQAGLKQMVIQ). Residues 395-415 (IEAIVFVICYNVLMTSLICLI) traverse the membrane as a helical segment. Residues 416 to 480 (VRVIVPLRLN…SRSLGELQMV (65 aa)) are Cytoplasmic-facing.

This sequence belongs to the ammonia transporter channel (TC 1.A.11.2) family.

It localises to the cell membrane. Involved in ammonium transport. May be involved in arbuscular mycorrhizal (AM) symbiosis with AM fungi. This is Ammonium transporter 2 member 4 from Medicago truncatula (Barrel medic).